The primary structure comprises 550 residues: Glucose-6-phosphate isomerase (550 aa).

The Proton donor role is filled by glutamate 356. Active-site residues include histidine 387 and lysine 515.

The protein belongs to the GPI family.

It is found in the cytoplasm. It catalyses the reaction alpha-D-glucose 6-phosphate = beta-D-fructose 6-phosphate. Its pathway is carbohydrate biosynthesis; gluconeogenesis. The protein operates within carbohydrate degradation; glycolysis; D-glyceraldehyde 3-phosphate and glycerone phosphate from D-glucose: step 2/4. In terms of biological role, catalyzes the reversible isomerization of glucose-6-phosphate to fructose-6-phosphate. The chain is Glucose-6-phosphate isomerase from Syntrophobacter fumaroxidans (strain DSM 10017 / MPOB).